The primary structure comprises 508 residues: Bifunctional purine biosynthesis protein PurH (508 aa).

In terms of domain architecture, MGS-like spans 1–145; it reads MIKRALLSTY…KNYKDVIVVV (145 aa).

The protein belongs to the PurH family.

The enzyme catalyses (6R)-10-formyltetrahydrofolate + 5-amino-1-(5-phospho-beta-D-ribosyl)imidazole-4-carboxamide = 5-formamido-1-(5-phospho-D-ribosyl)imidazole-4-carboxamide + (6S)-5,6,7,8-tetrahydrofolate. It carries out the reaction IMP + H2O = 5-formamido-1-(5-phospho-D-ribosyl)imidazole-4-carboxamide. The protein operates within purine metabolism; IMP biosynthesis via de novo pathway; 5-formamido-1-(5-phospho-D-ribosyl)imidazole-4-carboxamide from 5-amino-1-(5-phospho-D-ribosyl)imidazole-4-carboxamide (10-formyl THF route): step 1/1. It functions in the pathway purine metabolism; IMP biosynthesis via de novo pathway; IMP from 5-formamido-1-(5-phospho-D-ribosyl)imidazole-4-carboxamide: step 1/1. This is Bifunctional purine biosynthesis protein PurH from Petrotoga mobilis (strain DSM 10674 / SJ95).